The chain runs to 486 residues: Monocarboxylate transporter 12 (486 aa).

Residues M1–L9 lie on the Cytoplasmic side of the membrane. Transmembrane regions (helical) follow at residues A10 to I30, A58 to V78, A86 to T106, L115 to G135, I148 to I168, L177 to I197, F253 to Y273, A289 to L309, Y320 to L340, F353 to G373, V383 to V403, and T410 to V430. At R431–T486 the chain is on the cytoplasmic side.

This sequence belongs to the major facilitator superfamily. Monocarboxylate porter (TC 2.A.1.13) family. As to quaternary structure, interacts with isoform 2 of BSG; this interaction is required for its localization to the plasma membrane. In terms of tissue distribution, highly expressed in the lung, liver, kidney, and pancreas. Expressed in eye lens.

It is found in the cell membrane. The protein resides in the basolateral cell membrane. The catalysed reaction is creatine(in) = creatine(out). The enzyme catalyses guanidinoacetate(in) = guanidinoacetate(out). Its activity is regulated as follows. Creatine uptake is inhibited by carbonyl cyanide 3-chlorophenylhydrazone (CCCP) and by valinomycin. Functions as a transporter for creatine and as well for its precursor guanidinoacetate. Transport of creatine and GAA is independent of resting membrane potential and extracellular Na(+), Cl(-), or pH. Contributes to the process of creatine biosynthesis and distribution. This is Monocarboxylate transporter 12 from Mus musculus (Mouse).